The primary structure comprises 560 residues: E3 SUMO-protein ligase CBX4 (560 aa).

The interval 1–75 is involved in interaction with H3C15 and H3C1; the sequence is MELPAVGEHV…LMGYRKRGPK (75 aa). Residues 1–539 are interaction with BMI1; it reads MELPAVGEHV…LSEFKPFFGN (539 aa). Positions 11–69 constitute a Chromo domain; the sequence is FAVESIEKKRIRKGRVEYLVKWRGWSPKYNTWEPEENILDPRLLIAFQNRERQEQLMGY. Residues Lys-77, Lys-106, Lys-114, and Lys-125 each participate in a glycyl lysine isopeptide (Lys-Gly) (interchain with G-Cter in SUMO2) cross-link. Residues 92-152 are disordered; that stretch reads VLTGLQDSST…PPGKSGKYYY (61 aa). At Lys-149 the chain carries N6-acetyllysine; alternate. Residue Lys-149 forms a Glycyl lysine isopeptide (Lys-Gly) (interchain with G-Cter in SUMO2); alternate linkage. Glycyl lysine isopeptide (Lys-Gly) (interchain with G-Cter in SUMO2) cross-links involve residues Lys-157, Lys-167, and Lys-178. Phosphoserine is present on Ser-182. Glycyl lysine isopeptide (Lys-Gly) (interchain with G-Cter in SUMO2) cross-links involve residues Lys-191, Lys-205, Lys-212, Lys-223, Lys-249, Lys-268, Lys-278, and Lys-280. Residues 217 to 243 form a disordered region; it reads AAGAPGKGSEKGPPNGMMPAPKEAVTG. Basic and acidic residues-rich tracts occupy residues 281–291 and 298–331; these read SGEVAEGEARS and AADE…REEE. The disordered stretch occupies residues 281–404; it reads SGEVAEGEAR…HHHHHHAVGL (124 aa). Glycyl lysine isopeptide (Lys-Gly) (interchain with G-Cter in SUMO2) cross-links involve residues Lys-320, Lys-352, and Lys-365. The span at 380 to 401 shows a compositional bias: basic residues; the sequence is PSHHPHPHPHHHHHHHHHHHHA. Position 467 is a phosphoserine (Ser-467). Lys-494 is covalently cross-linked (Glycyl lysine isopeptide (Lys-Gly) (interchain with G-Cter in SUMO2); alternate). Lys-494 is covalently cross-linked (Glycyl lysine isopeptide (Lys-Gly) (interchain with G-Cter in SUMO); alternate). At Thr-497 the chain carries Phosphothreonine; by HIPK2. Positions 509–521 are enriched in low complexity; it reads AAPTTTAEKPPAE. Positions 509 to 528 are disordered; the sequence is AAPTTTAEKPPAEAQDEPAE. The segment at 531 to 556 is involved in interaction with H3C15 and RNF2; that stretch reads SEFKPFFGNIIITDVTANCLTVTFKE. Positions 540–560 are interaction with RNF2; it reads IIITDVTANCLTVTFKEYVTV.

As to quaternary structure, interacts with histone H3-K9Me3. Interacts with CHTOP. Component of a PRC1-like complex. The composition of the PRC1 complex differs between the PRC1 complex in pluripotent embryonic stem cells containing RNF2, CBX7 and PCGF2, and the PRC1 complex in differentiating cells containing RNF2, CBX2, CBX4 and BMI1. Self-associates. Interacts with SUV39H1 and HIPK2. Interacts with CSNK2B. May interact with H3C15, H3C1 and RNF2. Interacts with SUMO1P1/SUMO5. Interacts with PRDM1/Blimp-1. Post-translationally, ubiquitinated. Ubiquitination regulates the function of the Polycomb group (PcG) multiprotein PRC1-like complex. Deubiquitinated by USP26. Phosphorylated on Thr-497 by HIPK2 upon DNA damage. This phosphorylation stimulates E3 SUMO-protein ligase activity and promotes sumoylation on Lys-494, as well as sumoylation of other target proteins, such as HNRNPK. In terms of tissue distribution, ubiquitous.

The protein localises to the nucleus. The protein resides in the nucleus speckle. Its pathway is protein modification; protein sumoylation. Functionally, E3 SUMO-protein ligase that catalyzes sumoylation of target proteins by promoting the transfer of SUMO from the E2 enzyme to the substrate. Involved in the sumoylation of HNRNPK, a p53/TP53 transcriptional coactivator, hence indirectly regulates p53/TP53 transcriptional activation resulting in p21/CDKN1A expression. Monosumoylates ZNF131. Its function is as follows. Component of a Polycomb group (PcG) multiprotein PRC1-like complex, a complex class required to maintain the transcriptionally repressive state of many genes, including Hox genes, throughout development. PcG PRC1 complex acts via chromatin remodeling and modification of histones; it mediates monoubiquitination of histone H2A 'Lys-119', rendering chromatin heritably changed in its expressibility. Binds to histone H3 trimethylated at 'Lys-9' (H3K9me3). Plays a role in the lineage differentiation of the germ layers in embryonic development. The chain is E3 SUMO-protein ligase CBX4 (CBX4) from Homo sapiens (Human).